The following is a 902-amino-acid chain: Proline-rich transmembrane protein 4 (902 aa).

The signal sequence occupies residues 1–18; the sequence is MAGRGCLELGLFCWVLLA. 2 disordered regions span residues 120-149 and 262-337; these read FTPWASSLPPESTSPLSGPTKRPTAPSQPR and PPPL…SGQP. Positions 125–139 are enriched in low complexity; that stretch reads SSLPPESTSPLSGPT. Positions 271 to 301 are enriched in polar residues; it reads SSPSPLDSVASPSSASIKTTPVQHDPTVSTS. 5 consecutive transmembrane segments (helical) span residues 371–391, 393–413, 431–451, 465–485, and 501–521; these read AGALFGLVALLALLSLALLPW, CPPGAPCLALLDLLLLSAGTT, ALAWLLLQDLPLPCLAAGLGL, PIGLAALLLLGLGLAAAAALG, and GLHAFLAAFLSGLLLALSCWG. A Phosphoserine modification is found at serine 642. Disordered stretches follow at residues 700 to 721, 771 to 811, and 836 to 872; these read GARANTTQSPASSPSSDCTVDF, KTGA…SLCG, and VLSPPRPSESSPSLPASGSYQALSPPSRDSPEHASEL. A compositionally biased stretch (polar residues) spans 703–717; that stretch reads ANTTQSPASSPSSDC. Residues 786 to 798 are compositionally biased toward pro residues; sequence SPAPPELPSPGAW. Composition is skewed to low complexity over residues 799 to 811 and 843 to 854; these read PPGSSASSGSLCG and SESSPSLPASGS.

Its subcellular location is the membrane. The sequence is that of Proline-rich transmembrane protein 4 (Prrt4) from Rattus norvegicus (Rat).